Reading from the N-terminus, the 172-residue chain is Disulfide bond formation protein B (172 aa).

Residues 1–13 (MIIRLAGMSVRQG) lie on the Cytoplasmic side of the membrane. A helical membrane pass occupies residues 14–30 (CLLGLLMCALMMGVALV). The Periplasmic portion of the chain corresponds to 31–48 (LQYVYGLTPCPLCIGQRI). Residues C40 and C43 are joined by a disulfide bond. The helical transmembrane segment at 49–65 (AVLLAAFVFAIGALHNP) threads the bilayer. Topologically, residues 66-72 (AGNLGRG) are cytoplasmic. Residues 73–90 (LYAGLAALASVLGLAVAA) form a helical membrane-spanning segment. At 91-147 (RHVWLQSLPPENVPSCGPGLDYMMEVLPLWDVLSRVLAGSGECAEIHGSLLGMSIPQ) the chain is on the periplasmic side. Cysteines 106 and 133 form a disulfide. A helical membrane pass occupies residues 148-166 (WTLLGFAVLLLIPLGMLAG). Residues 167-172 (IVIRRR) are Cytoplasmic-facing.

This sequence belongs to the DsbB family.

The protein resides in the cell inner membrane. In terms of biological role, required for disulfide bond formation in some periplasmic proteins. Acts by oxidizing the DsbA protein. The protein is Disulfide bond formation protein B of Chromohalobacter salexigens (strain ATCC BAA-138 / DSM 3043 / CIP 106854 / NCIMB 13768 / 1H11).